We begin with the raw amino-acid sequence, 155 residues long: SsrA-binding protein (155 aa).

The protein belongs to the SmpB family.

Its subcellular location is the cytoplasm. Its function is as follows. Required for rescue of stalled ribosomes mediated by trans-translation. Binds to transfer-messenger RNA (tmRNA), required for stable association of tmRNA with ribosomes. tmRNA and SmpB together mimic tRNA shape, replacing the anticodon stem-loop with SmpB. tmRNA is encoded by the ssrA gene; the 2 termini fold to resemble tRNA(Ala) and it encodes a 'tag peptide', a short internal open reading frame. During trans-translation Ala-aminoacylated tmRNA acts like a tRNA, entering the A-site of stalled ribosomes, displacing the stalled mRNA. The ribosome then switches to translate the ORF on the tmRNA; the nascent peptide is terminated with the 'tag peptide' encoded by the tmRNA and targeted for degradation. The ribosome is freed to recommence translation, which seems to be the essential function of trans-translation. The protein is SsrA-binding protein of Helicobacter hepaticus (strain ATCC 51449 / 3B1).